Reading from the N-terminus, the 1093-residue chain is Electroneutral sodium bicarbonate exchanger 1 (1093 aa).

Disordered regions lie at residues 1-25 (MPAAGSNEPDGVLSYQRPDEEAVVD) and 55-95 (PLGR…HDTP). Over 1–478 (MPAAGSNEPD…DYRDALSLQC (478 aa)) the chain is Extracellular. The span at 59–77 (QSHRHHRTHGQKHRRRGRG) shows a compositional bias: basic residues. Phe167 and Leu169 together coordinate Zn(2+). The VTVLP; mediates dimerization motif lies at 340–344 (LFILL). A helical membrane pass occupies residues 479–499 (LASFLFLYCACMSPVITFGGL). The Cytoplasmic segment spans residues 500–523 (LGEATEGRISAIESLFGASMTGIA). Residues 524-544 (YSLFAGQALTILGSTGPVLVF) form a helical membrane-spanning segment. The Extracellular segment spans residues 545–565 (EKILFKFCKDYALSYLSLRAC). The chain crosses the membrane as a helical span at residues 566–586 (IGLWTAFLCIVLVATDASSLV). Over 587–595 (CYITRFTEE) the chain is Cytoplasmic. Residues 596–616 (AFASLICIIFIYEAIEKLIHL) form a helical membrane-spanning segment. The Extracellular portion of the chain corresponds to 617–687 (AETYPIHMHS…EFMGSACGHH (71 aa)). 2 disulfides stabilise this stretch: Cys636/Cys684 and Cys638/Cys672. Asn646 carries an N-linked (GlcNAc) asparagine glycan. The helical transmembrane segment at 688–708 (GPYTPDVLFWSCILFFTTFIL) threads the bilayer. The Cytoplasmic segment spans residues 709-731 (SSTLKTFKTSRYFPTRVRSMVSD). The helical transmembrane segment at 732–752 (FAVFLTIFTMVIIDFLIGVPS) threads the bilayer. The Extracellular segment spans residues 753–778 (PKLQVPSVFKPTRDDRGWIINPIGPN). A helical transmembrane segment spans residues 779–799 (PWWTVIAAIIPALLCTILIFM). Residues 800–824 (DQQITAVIINRKEHKLKKGCGYHLD) lie on the Cytoplasmic side of the membrane. Residues 825–845 (LLMVAIMLGVCSIMGLPWFVA) traverse the membrane as a helical segment. Residues 846 to 881 (ATVLSITHVNSLKLESECSAPGEQPKFLGIREQRVT) are Extracellular-facing. Residues 882–902 (GLMIFVLMGCSVFMTAILKFI) form a helical membrane-spanning segment. The Cytoplasmic portion of the chain corresponds to 903–904 (PM). The chain crosses the membrane as a helical span at residues 905 to 925 (PVLYGVFLYMGVSSLQGIQFF). At 926–962 (DRLKLFGMPAKHQPDFIYLRHVPLRKVHLFTLIQLTC) the chain is on the extracellular side. Residues 963–983 (LVLLWVIKASPAAIVFPMMVL) traverse the membrane as a helical segment. Residues 984-1093 (ALVFVRKVMD…GNAKEKSLFN (110 aa)) lie on the Cytoplasmic side of the membrane. Residues 1010 to 1036 (ESKKKKLDDAKKKAKEEEEAEKMLEIG) are a coiled coil.

Belongs to the anion exchanger (TC 2.A.31) family. Homodimer. In terms of tissue distribution, expressed in the pyramidal cells of the hippocampus (at protein level). Highly expressed in all major regions of the brain, spinal column and in testis, and moderate levels in trachea, thyroid and medulla region of kidney. Low expression levels observed in pancreas and kidney cortex. Expressed in the brain. As to expression, expressed in the brain, heart and kidney.

The protein resides in the apical cell membrane. The protein localises to the basolateral cell membrane. It is found in the cytoplasmic vesicle. It localises to the secretory vesicle. Its subcellular location is the synaptic vesicle membrane. The protein resides in the cell membrane. The catalysed reaction is 2 hydrogencarbonate(out) + chloride(in) + Na(+)(out) = 2 hydrogencarbonate(in) + chloride(out) + Na(+)(in). With respect to regulation, activity is inhibited by 4,4'-Di-isothiocyanatostilbene-2,2'-disulfonic acid (DIDS - an inhibitor of several anion channels and transporters). Activity is inhibited by 4,4'-Di-isothiocyanatostilbene-2,2'-disulfonic acid (DIDS - an inhibitor of several anion channels and transporters). Zinc-binding negatively regulates its activity. Functionally, mediates electroneutral sodium- and carbonate-dependent chloride-HCO3(-) exchange with a Na(+):HCO3(-) stoichiometry of 2:1. Plays a major role in pH regulation in neurons. Mediates sodium reabsorption in the renal cortical collecting ducts. This Homo sapiens (Human) protein is Electroneutral sodium bicarbonate exchanger 1.